Reading from the N-terminus, the 301-residue chain is Pantothenate synthetase (301 aa).

30-37 is a binding site for ATP; that stretch reads MGNLHEGH. H37 (proton donor) is an active-site residue. Q61 contacts (R)-pantoate. Residue Q61 coordinates beta-alanine. 149-152 provides a ligand contact to ATP; the sequence is GEKD. Q155 contacts (R)-pantoate. ATP is bound by residues V178 and 186–189; that span reads MSSR.

This sequence belongs to the pantothenate synthetase family. As to quaternary structure, homodimer.

It localises to the cytoplasm. The enzyme catalyses (R)-pantoate + beta-alanine + ATP = (R)-pantothenate + AMP + diphosphate + H(+). The protein operates within cofactor biosynthesis; (R)-pantothenate biosynthesis; (R)-pantothenate from (R)-pantoate and beta-alanine: step 1/1. Catalyzes the condensation of pantoate with beta-alanine in an ATP-dependent reaction via a pantoyl-adenylate intermediate. This Vibrio parahaemolyticus serotype O3:K6 (strain RIMD 2210633) protein is Pantothenate synthetase.